We begin with the raw amino-acid sequence, 308 residues long: ABC transporter protein AbcA (308 aa).

Residues 6-245 form the ABC transporter domain; it reads LAVSGVNKSF…YHKLLHMEGD (240 aa). An ATP-binding site is contributed by 58–65; it reads GHNGAGKS.

The protein belongs to the ABC transporter superfamily.

Functionally, influences the expression of the surface array protein gene (vapA). May have both regulatory and transport activities. This is ABC transporter protein AbcA (abcA) from Aeromonas salmonicida.